Here is a 60-residue protein sequence, read N- to C-terminus: Large ribosomal subunit protein uL30 (60 aa).

It belongs to the universal ribosomal protein uL30 family. As to quaternary structure, part of the 50S ribosomal subunit.

The sequence is that of Large ribosomal subunit protein uL30 from Flavobacterium psychrophilum (strain ATCC 49511 / DSM 21280 / CIP 103535 / JIP02/86).